Reading from the N-terminus, the 401-residue chain is Enolase (401 aa).

A (2R)-2-phosphoglycerate-binding site is contributed by Gln-154. Glu-196 (proton donor) is an active-site residue. Mg(2+)-binding residues include Asp-232, Glu-275, and Asp-302. (2R)-2-phosphoglycerate-binding residues include Lys-327, Arg-356, Ser-357, and Lys-378. Lys-327 serves as the catalytic Proton acceptor.

The protein belongs to the enolase family. It depends on Mg(2+) as a cofactor.

It localises to the cytoplasm. The protein localises to the secreted. Its subcellular location is the cell surface. The catalysed reaction is (2R)-2-phosphoglycerate = phosphoenolpyruvate + H2O. Its pathway is carbohydrate degradation; glycolysis; pyruvate from D-glyceraldehyde 3-phosphate: step 4/5. Catalyzes the reversible conversion of 2-phosphoglycerate (2-PG) into phosphoenolpyruvate (PEP). It is essential for the degradation of carbohydrates via glycolysis. This Haloarcula marismortui (strain ATCC 43049 / DSM 3752 / JCM 8966 / VKM B-1809) (Halobacterium marismortui) protein is Enolase.